A 444-amino-acid chain; its full sequence is Ribosome biogenesis protein YTM1 (444 aa).

A ubiquitin-like (UBL) domain region spans residues 8–89 (VKLRFFTREE…ETFLNVEYTR (82 aa)). WD repeat units lie at residues 99–138 (SFDNEDWVSSLDVGSNYIYSGSYDGIVRTYNLSGKVEKQY), 140–178 (GHSGPIRAVHYISSTRLVSAGNDRTLRLWKTKNDDLKSI), 194–231 (GHKAPVVSIDVSKDRILSASCDNTVSLWSTNYKEMTVI), 269–309 (SHSA…CVDT), 311–350 (TTSYSLLSVAQLPKLNLLACGSSARHITLHDPRVNSSSKI), 357–397 (GHKN…AMYT), and 408–444 (GVNDKVFAVKWAKGVGIISGGQDKKIQINKGDNIFSN). The segment at 99 to 444 (SFDNEDWVSS…INKGDNIFSN (346 aa)) is sufficient for interaction with ERB1 and association with 66S pre-ribosomes.

It belongs to the WD repeat WDR12/YTM1 family. Component of the NOP7 complex, composed of ERB1, NOP7 and YTM1. The complex is held together by ERB1, which interacts with NOP7 via its N-terminal domain and with YTM1 via a high-affinity interaction between the seven-bladed beta-propeller domains of the 2 proteins. The NOP7 complex associates with the 66S pre-ribosome. Interacts (via UBL domain) with MDN1 (via VWFA/MIDAS domain).

Its subcellular location is the nucleus. It localises to the nucleolus. The protein localises to the nucleoplasm. Its function is as follows. Component of the NOP7 complex, which is required for maturation of the 25S and 5.8S ribosomal RNAs and formation of the 60S ribosome. The chain is Ribosome biogenesis protein YTM1 from Kluyveromyces lactis (strain ATCC 8585 / CBS 2359 / DSM 70799 / NBRC 1267 / NRRL Y-1140 / WM37) (Yeast).